A 1103-amino-acid chain; its full sequence is MSNKKRSKNENDESTSLPLENSELLIEYIHNLKSCLNVYRREIQEKNKYISIIKNDLSFHECILTNVNVVWSVFNNDLLNLLCNNEQKEEGEEIIKQRNIGDEINEYNNLTKLQNDENIKNNNMIKEDLEDDANQNILMKSPYYNIENFLQVFLKYINKKKKKVKVKVKDEGKKEKIEDKKYEQDDEEENEEEEEEEEEEEGEEENKEDEEFFKTFVSFNLYHNNNEKNISYDKNLVKQENDNKDEARGNDNMCGNYDIHNERGEMLDKGKSYSGDEKINTSDNAKSCSGDEKVITSDNGKSYDYVKNESEEQEEKENMLNNKKRSLECNPNEAKKICFSLEEKIGTVQSVKLKEYNELSKENIEKNKHDDNNICNYLSHNEGENVIEREDKLFNKLNNKNYRNEEEKKKNQINFDYLKKKIKNNQDVFEETIQKCFLINLKKTLNLINKIMYLKNVEFRKYNLDYIRKINYEKCFYYKNYIDIKKKISELQKDNESLKIQVDRLEKKKATLIYKLNNDNIRKHILDNNIKDYQNGIDNSKVSYFDEGENPYNRNNKNYRTDNKNSDDNNNNNNYYYNNYNSDDNYNSEDNEYNNGNYRFRNNYKKDSLNEDDVKKNPLKVCHKINSDSNIFVNFENIITKQNIIHSEPFRNLLKESNELYITLKEKEKENIILKNEILKMENKKDEEYEHLLNNTIEDKKELTRSIKELEINMMTCNMEKDKISNKVNTLEYEINVLKNIDKNQTMQLQQKENDILKMKLYIEKLKLSEKNLKDKIILLENEKDKMLSGIHIKDNSFNEESKSEEGKIQLRDIQNDNDEKYDDEKKRFKELFIENQKLKEELNKKRNVEEELHSLRKNYNIINEEIEEITKEFEKKQEQVDEMILQIKNKELELLDKFNNKMNKAYVEEKLKELKNTYEEKMKHINNIYKKHDDFVNIYLNLFFQARKNAILSDSQREEQMNLFIKLKDKYDIIFQKKIELTDILKNVYDCNKKLIGHCQDLEKENSTLQNKLSNEIKNSKMLSKNLSKNSDDHLLIEENNELRRRLICSVCMENFRNYIIIKCGHIYCNNCIFNNLKTRNRKCPQCKVPFDKKDLQKIFLD.

The stretch at 173-212 (KKEKIEDKKYEQDDEEENEEEEEEEEEEEGEEENKEDEEF) forms a coiled coil. 2 disordered regions span residues 178 to 210 (EDKK…KEDE) and 271 to 301 (KSYS…DNGK). A compositionally biased stretch (acidic residues) spans 184-210 (QDDEEENEEEEEEEEEEEGEEENKEDE). The span at 271–280 (KSYSGDEKIN) shows a compositional bias: basic and acidic residues. 2 coiled-coil regions span residues 304–330 (DYVK…LECN) and 478–518 (YKNY…KLNN). Positions 544–601 (YFDEGENPYNRNNKNYRTDNKNSDDNNNNNNYYYNNYNSDDNYNSEDNEYNNGNYRFR) are disordered. A compositionally biased stretch (low complexity) spans 568 to 585 (DNNNNNNYYYNNYNSDDN). 3 coiled-coil regions span residues 650–791 (FRNL…LSGI), 819–932 (DEKY…IYKK), and 993–1030 (NKKL…NLSK). The segment at 1050-1089 (CSVCMENFRNYIIIKCGHIYCNNCIFNNLKTRNRKCPQCK) adopts an RING-type zinc-finger fold.

It localises to the host cell membrane. The chain is Trophozoite exported protein 1 from Plasmodium falciparum (isolate 3D7).